An 87-amino-acid chain; its full sequence is Mu-theraphotoxin-Hs1a (87 aa).

Positions 1 to 24 are cleaved as a signal peptide; the sequence is MVNMKASMFLTFAGLVLLFVVCYA. Residues 25 to 52 constitute a propeptide that is removed on maturation; that stretch reads SESEEKEFPKEMLSSIFAVDNDFKQEER. Cystine bridges form between C54/C67, C61/C72, and C66/C79.

This sequence belongs to the neurotoxin 10 (Hwtx-1) family. 51 (Hntx-8) subfamily. Hntx-8 sub-subfamily. In terms of tissue distribution, expressed by the venom gland.

It localises to the secreted. Probable sodium channel pore blocker that dose-dependently inhibits voltage-gated sodium channels (VGSC) on DUM neurons in a way similar to tetrodotoxin. Has no effect on the kinetics of activation and inactivation. Seems not to interact with VGSC in an inactivated state. In vivo, reversibly paralyzes cockroaches, and can enhance the muscular contraction elicited by stimulating its nerve. The protein is Mu-theraphotoxin-Hs1a of Cyriopagopus schmidti (Chinese bird spider).